A 249-amino-acid chain; its full sequence is Elongator complex protein 6 homolog (249 aa).

Belongs to the ELP6 family. Component of the elongator complex.

The protein localises to the cytoplasm. Its subcellular location is the nucleus. It functions in the pathway tRNA modification; 5-methoxycarbonylmethyl-2-thiouridine-tRNA biosynthesis. Component of the elongator complex which is required for multiple tRNA modifications, including mcm5U (5-methoxycarbonylmethyl uridine), mcm5s2U (5-methoxycarbonylmethyl-2-thiouridine), and ncm5U (5-carbamoylmethyl uridine). The elongator complex catalyzes formation of carboxymethyluridine in the wobble base at position 34 in tRNAs. The sequence is that of Elongator complex protein 6 homolog from Schizosaccharomyces pombe (strain 972 / ATCC 24843) (Fission yeast).